Reading from the N-terminus, the 219-residue chain is MEHEFWHERWAKDQIGFHEGTVNQYLHDHWPELAGNGTDAVFVPLCGKAHDMWWLHDRGHPIIGVELSEVACKDFFEEAQEKASVHPGEPFTTFRHDDLQIWCGDYFQLVPDDLKHIRLVYDRAALIALPPEMRKSYVNHLTAIIPDDTRILLITLDYDSSEMQGPPFNVTDDEVFRLYGEDYEINQVLKRDMARDNPFAKRRGLRNGATESVFTLVKK.

S-adenosyl-L-methionine contacts are provided by Trp10, Leu45, Glu66, and Arg123.

This sequence belongs to the class I-like SAM-binding methyltransferase superfamily. TPMT family.

It is found in the cytoplasm. The enzyme catalyses S-adenosyl-L-methionine + a thiopurine = S-adenosyl-L-homocysteine + a thiopurine S-methylether.. This is Thiopurine S-methyltransferase from Marinobacter nauticus (strain ATCC 700491 / DSM 11845 / VT8) (Marinobacter aquaeolei).